A 145-amino-acid polypeptide reads, in one-letter code: HTH-type transcriptional regulator MhqR (145 aa).

An HTH marR-type domain is found at 5–137 (SLKLFIVLSR…CTEMLKRVGL (133 aa)). A DNA-binding region (H-T-H motif) is located at residues 51–74 (LQQIGDKILLASGSITYVVDKLEQ).

In terms of biological role, negatively regulates mhqA, mhqED, mhqNOP, and azoR2 which may contribute to the degradation of aromatic compounds. The sequence is that of HTH-type transcriptional regulator MhqR (mhqR) from Bacillus subtilis (strain 168).